The sequence spans 788 residues: Endonuclease MutS2 (788 aa).

332 to 339 (GPNTGGKT) serves as a coordination point for ATP. Residues 713-788 (VDLRGMDAEE…GTGVTVVEIK (76 aa)) form the Smr domain.

The protein belongs to the DNA mismatch repair MutS family. MutS2 subfamily. Homodimer. Binds to stalled ribosomes, contacting rRNA.

Its function is as follows. Endonuclease that is involved in the suppression of homologous recombination and thus may have a key role in the control of bacterial genetic diversity. Acts as a ribosome collision sensor, splitting the ribosome into its 2 subunits. Detects stalled/collided 70S ribosomes which it binds and splits by an ATP-hydrolysis driven conformational change. Acts upstream of the ribosome quality control system (RQC), a ribosome-associated complex that mediates the extraction of incompletely synthesized nascent chains from stalled ribosomes and their subsequent degradation. Probably generates substrates for RQC. This is Endonuclease MutS2 from Clostridium botulinum (strain 657 / Type Ba4).